The primary structure comprises 94 residues: MIKSELIARLANENPHLTQKDVERVVGVILERMIGALEDGGRVELRGFGALSVRSRPARAGRNPRTGETVDVRAKHVPFFKSGKELRGRLNADE.

Belongs to the bacterial histone-like protein family. As to quaternary structure, heterodimer of an alpha and a beta chain.

Its function is as follows. This protein is one of the two subunits of integration host factor, a specific DNA-binding protein that functions in genetic recombination as well as in transcriptional and translational control. In Caulobacter sp. (strain K31), this protein is Integration host factor subunit beta.